We begin with the raw amino-acid sequence, 231 residues long: Uridylate kinase (231 aa).

Position 9–12 (9–12 (KLSG)) interacts with ATP. A UMP-binding site is contributed by G49. ATP-binding residues include G50 and R54. Residues D69 and 130–137 (AGMPYFST) contribute to the UMP site. 3 residues coordinate ATP: N158, Y164, and D167.

This sequence belongs to the UMP kinase family. In terms of assembly, homohexamer.

The protein localises to the cytoplasm. It carries out the reaction UMP + ATP = UDP + ADP. It functions in the pathway pyrimidine metabolism; CTP biosynthesis via de novo pathway; UDP from UMP (UMPK route): step 1/1. Its activity is regulated as follows. Inhibited by UTP. In terms of biological role, catalyzes the reversible phosphorylation of UMP to UDP. In Tropheryma whipplei (strain Twist) (Whipple's bacillus), this protein is Uridylate kinase.